A 70-amino-acid chain; its full sequence is Protein tam14 (70 aa).

The segment covering 1–19 (MPTVQTPSQRRANTQFQKN) has biased composition (polar residues). The segment at 1-20 (MPTVQTPSQRRANTQFQKNI) is disordered. A helical transmembrane segment spans residues 45–65 (IAMFFILLMSGGIILGILRFL).

Belongs to the RAMP4 family.

It localises to the membrane. It is found in the endoplasmic reticulum membrane. Functionally, interacts with target proteins during their translocation into the lumen of the endoplasmic reticulum. Protects unfolded target proteins against degradation during ER stress. May facilitate glycosylation of target proteins after termination of ER stress. The protein is Protein tam14 (tam14) of Schizosaccharomyces pombe (strain 972 / ATCC 24843) (Fission yeast).